A 633-amino-acid chain; its full sequence is Terminal nucleotidyltransferase 4B (633 aa).

Residues 1 to 115 (MFRSGERPLG…GGGRADGGGG (115 aa)) form a disordered region. The segment covering 25 to 34 (ETTNNNNNHH) has biased composition (polar residues). Low complexity-rich tracts occupy residues 36–52 (PAAW…ASPV) and 60–70 (RPAAALPASES). Polar residues predominate over residues 87 to 98 (ASTYGLNYSLLQ). Gly residues predominate over residues 103–115 (RAAGGGRADGGGG). Residues D191 and D193 each contribute to the Mg(2+) site. G254, K279, S297, Y298, N382, and R386 together coordinate ATP. One can recognise a PAP-associated domain in the interval 322-382 (NYGVLLIEFF…YIEDPLQPGN (61 aa)). The segment at 484–633 (LGKCRSNASE…RDAPLSELCR (150 aa)) is disordered. Over residues 492-519 (SEPLSKHSSNSSSGPVSSSSATQSSSSD) the composition is skewed to low complexity. Residue K531 forms a Glycyl lysine isopeptide (Lys-Gly) (interchain with G-Cter in SUMO2) linkage. Residues 542-552 (RVGSQDVSLEV) are compositionally biased toward polar residues. At S545 the chain carries Phosphoserine. Glycyl lysine isopeptide (Lys-Gly) (interchain with G-Cter in SUMO2) cross-links involve residues K558, K573, and K587. A compositionally biased stretch (polar residues) spans 559–614 (MQSTQTTNTPNNANKSQHGSARLFRSSSKGFQGTAQTSHGALMTSKQHQGKSNTQY). A Basic, involved in binding of the RNA primer motif is present at residues 618 to 624 (KKRRHKR).

This sequence belongs to the DNA polymerase type-B-like family. As to quaternary structure, component of a nucleolar TRAMP-like complex, an ATP-dependent exosome regulatory complex consisting of a helicase (MTREX), an oligadenylate polymerase (TENT4B or TENT4A), and a substrate specific RNA-binding factor (ZCCHC7 or ZCCHC8). Several TRAMP-like complexes exist with specific compositions and are associated with nuclear, or nucleolar RNA exosomes. Requires Mg(2+) as cofactor. It depends on Mn(2+) as a cofactor.

It localises to the nucleus. It is found in the nucleolus. The protein resides in the cytoplasm. It carries out the reaction RNA(n) + ATP = RNA(n)-3'-adenine ribonucleotide + diphosphate. Functionally, terminal nucleotidyltransferase that catalyzes preferentially the transfer of ATP and GTP on RNA 3' poly(A) tail creating a heterogeneous 3' poly(A) tail leading to mRNAs stabilization by protecting mRNAs from active deadenylation. Also functions as a catalytic subunit of a TRAMP-like complex which has a poly(A) RNA polymerase activity and is involved in a post-transcriptional quality control mechanism. Polyadenylation with short oligo(A) tails is required for the degradative activity of the exosome on several of its nuclear RNA substrates. Doesn't need a cofactor for polyadenylation activity (in vitro). Plays a role in replication-dependent histone mRNA degradation, probably through terminal uridylation of mature histone mRNAs. May play a role in sister chromatid cohesion. The chain is Terminal nucleotidyltransferase 4B from Mus musculus (Mouse).